The sequence spans 196 residues: Nucleoid occlusion factor SlmA (196 aa).

The 62-residue stretch at 7-68 (TNRREEILQA…GLIEFIEEAL (62 aa)) folds into the HTH tetR-type domain. A DNA-binding region (H-T-H motif) is located at residues 31–50 (TTAKLAKQVGVSEAALYRHF). Residues 110–142 (HALMFENERLRDRINQLFERIETQLRQILRERK) adopt a coiled-coil conformation.

It belongs to the nucleoid occlusion factor SlmA family. As to quaternary structure, homodimer. Interacts with FtsZ.

Its subcellular location is the cytoplasm. The protein resides in the nucleoid. Functionally, required for nucleoid occlusion (NO) phenomenon, which prevents Z-ring formation and cell division over the nucleoid. Acts as a DNA-associated cell division inhibitor that binds simultaneously chromosomal DNA and FtsZ, and disrupts the assembly of FtsZ polymers. SlmA-DNA-binding sequences (SBS) are dispersed on non-Ter regions of the chromosome, preventing FtsZ polymerization at these regions. The chain is Nucleoid occlusion factor SlmA from Vibrio campbellii (strain ATCC BAA-1116).